Consider the following 224-residue polypeptide: Orotate phosphoribosyltransferase (224 aa).

5-phospho-alpha-D-ribose 1-diphosphate is bound by residues Lys26, 73–74 (YK), Arg100, Lys101, Lys104, His106, and 127–135 (EDVTTSGKS). Residues Thr131 and Arg160 each coordinate orotate.

This sequence belongs to the purine/pyrimidine phosphoribosyltransferase family. PyrE subfamily. In terms of assembly, homodimer. Mg(2+) is required as a cofactor.

The enzyme catalyses orotidine 5'-phosphate + diphosphate = orotate + 5-phospho-alpha-D-ribose 1-diphosphate. It participates in pyrimidine metabolism; UMP biosynthesis via de novo pathway; UMP from orotate: step 1/2. Catalyzes the transfer of a ribosyl phosphate group from 5-phosphoribose 1-diphosphate to orotate, leading to the formation of orotidine monophosphate (OMP). The chain is Orotate phosphoribosyltransferase from Clostridium botulinum (strain Alaska E43 / Type E3).